Consider the following 455-residue polypeptide: Polyadenylation factor subunit 2 (455 aa).

7 WD repeats span residues 80 to 119 (KVKHVIPAIQWSPEGRRLIVATFSGEFSLWNGSSFTFETI), 122 to 162 (AHDT…KELD), 164 to 203 (IHTEGIRDVAFSNNDSKFVTCSDDNILKIWNFSNGQQERV), 206 to 245 (GHHWDVRSCDWHPELGLIVSGSKDNLVKLWDPRSGQCVST), 248 to 288 (KFKH…NELM), 291 to 331 (RDEV…EKPI), and 337 to 376 (AHEKCISAIAYNPVGHILATAAKDRTIRFWTRARPVDPNA). Disordered stretches follow at residues 406 to 425 (EYGAAPPPASTAFPQQTQYN) and 430 to 455 (RVPEIKEPTPTTDKEQRTSILPGLSI). A compositionally biased stretch (basic and acidic residues) spans 432 to 446 (PEIKEPTPTTDKEQR).

The protein localises to the nucleus. Its function is as follows. Required for 3'-end cleavage and polyadenylation of pre-mRNAs. Also involved in chromosome segregation where it has a role in chromosome attachment to the mitotic spindle. The chain is Polyadenylation factor subunit 2 (PFS2) from Candida glabrata (strain ATCC 2001 / BCRC 20586 / JCM 3761 / NBRC 0622 / NRRL Y-65 / CBS 138) (Yeast).